A 146-amino-acid chain; its full sequence is Sordarin/hypoxysordarin biosynthesis cluster protein G (146 aa).

It functions in the pathway antibiotic biosynthesis. In terms of biological role, part of the gene cluster that mediates the biosynthesis of sordarin and hypoxysordarin, glycoside antibiotics with a unique tetracyclic diterpene aglycone structure. First, the geranylgeranyl diphosphate synthase sdnC constructs GGDP from farnesyl diphosphate and isopentenyl diphosphate. The diterpene cyclase sdnA then catalyzes the cyclization of GGDP to afford cycloaraneosene. Cycloaraneosene is then hydroxylated four times by the putative cytochrome P450 monooxygenases sdnB, sdnE, sdnF and sdnH to give a hydroxylated cycloaraneosene derivative such as cycloaraneosene-8,9,13,19-tetraol. Although the order of the hydroxylations is unclear, at least C8, C9 and C13 of the cycloaraneosene skeleton are hydroxylated before the sordaricin formation. Dehydration of the 13-hydroxy group of the hydroxylated cycloaraneosene derivative might be catalyzed by an unassigned hypothetical protein such as sdnG and sdnP to construct the cyclopentadiene moiety. The FAD-dependent oxidoreductase sdnN is proposed to catalyze the oxidation at C9 of the hydroxylated cycloaraneosene derivative and also catalyze the Baeyer-Villiger oxidation to give the lactone intermediate. The presumed lactone intermediate would be hydrolyzed to give an acrolein moiety and a carboxylate moiety. Then, [4+2]cycloaddition would occur between the acrolein moiety and the cyclopentadiene moiety to give sordaricin. SdnN might also be involved in the [4+2]cycloaddition after the hypothesized oxidation to accommodate the oxidized product and prompt the [4+2]cycloaddition. GDP-6-deoxy-D-altrose may be biosynthesized from GDP-D-mannose by the putative GDP-mannose-4,6-dehydratase sdnI and the short-chain dehydrogenase sdnK. The glycosyltransferase sdnJ catalyzes the attachment of 6-deoxy-D-altrose onto the 19-hydroxy group of sordaricin to give 4'-O-demethylsordarin. The methyltransferase sdnD would complete the biosynthesis of sordarin. Sordarin can be further modified into hypoxysordarin. The unique acyl chain at the 3'-hydroxy group of hypoxysordarin would be constructed by an iterative type I PKS sdnO and the trans-acting polyketide methyltransferase sdnL. SdnL would be responsible for the introduction of an alpha-methyl group of the polyketide chain. Alternatively, the beta-lactamase-like protein sdnR might be responsible for the cleavage and transfer of the polyketide chain from the PKS sdnO to sordarin. Two putative cytochrome P450 monooxygenases, sdnQ and sdnT, might catalyze the epoxidations of the polyketide chain to complete the biosynthesis of hypoxysordarin. Transcriptional regulators sdnM and sdnS are presumably encoded for the transcriptional regulation of the expression of the sdn gene cluster. The protein is Sordarin/hypoxysordarin biosynthesis cluster protein G of Sordaria araneosa (Pleurage araneosa).